The sequence spans 99 residues: MPEISRDQVAHLAKLSRLALTEEELEQFAGQIDDIVGYVSAVQNVDAAGVEPMSHPHSIATTMREDVVHKTLDAAAALDQAPAVEDGRFMVPQILGEGD.

The protein belongs to the GatC family. Heterotrimer of A, B and C subunits.

The enzyme catalyses L-glutamyl-tRNA(Gln) + L-glutamine + ATP + H2O = L-glutaminyl-tRNA(Gln) + L-glutamate + ADP + phosphate + H(+). The catalysed reaction is L-aspartyl-tRNA(Asn) + L-glutamine + ATP + H2O = L-asparaginyl-tRNA(Asn) + L-glutamate + ADP + phosphate + 2 H(+). Its function is as follows. Allows the formation of correctly charged Asn-tRNA(Asn) or Gln-tRNA(Gln) through the transamidation of misacylated Asp-tRNA(Asn) or Glu-tRNA(Gln) in organisms which lack either or both of asparaginyl-tRNA or glutaminyl-tRNA synthetases. The reaction takes place in the presence of glutamine and ATP through an activated phospho-Asp-tRNA(Asn) or phospho-Glu-tRNA(Gln). This Corynebacterium glutamicum (strain R) protein is Aspartyl/glutamyl-tRNA(Asn/Gln) amidotransferase subunit C.